The sequence spans 216 residues: Probable nicotinate-nucleotide adenylyltransferase (216 aa).

This sequence belongs to the NadD family.

The catalysed reaction is nicotinate beta-D-ribonucleotide + ATP + H(+) = deamido-NAD(+) + diphosphate. It functions in the pathway cofactor biosynthesis; NAD(+) biosynthesis; deamido-NAD(+) from nicotinate D-ribonucleotide: step 1/1. In terms of biological role, catalyzes the reversible adenylation of nicotinate mononucleotide (NaMN) to nicotinic acid adenine dinucleotide (NaAD). The polypeptide is Probable nicotinate-nucleotide adenylyltransferase (Klebsiella pneumoniae (strain 342)).